The chain runs to 146 residues: Flagellar assembly factor FliW (146 aa).

Belongs to the FliW family. As to quaternary structure, interacts with translational regulator CsrA and flagellin(s).

The protein localises to the cytoplasm. Its function is as follows. Acts as an anti-CsrA protein, binds CsrA and prevents it from repressing translation of its target genes, one of which is flagellin. Binds to flagellin and participates in the assembly of the flagellum. This chain is Flagellar assembly factor FliW, found in Shouchella clausii (strain KSM-K16) (Alkalihalobacillus clausii).